A 329-amino-acid polypeptide reads, in one-letter code: GTP 3',8-cyclase (329 aa).

The region spanning 8-229 (AFARTFYYLR…AGWQRRLPGR (222 aa)) is the Radical SAM core domain. Arg-17 serves as a coordination point for GTP. Residues Cys-24 and Cys-28 each coordinate [4Fe-4S] cluster. Position 30 (Tyr-30) interacts with S-adenosyl-L-methionine. Cys-31 serves as a coordination point for [4Fe-4S] cluster. Arg-68 contacts GTP. Gly-72 provides a ligand contact to S-adenosyl-L-methionine. Thr-99 is a GTP binding site. Ser-123 is a binding site for S-adenosyl-L-methionine. Lys-160 lines the GTP pocket. An S-adenosyl-L-methionine-binding site is contributed by Met-194. [4Fe-4S] cluster contacts are provided by Cys-257 and Cys-260. 262-264 (RLR) serves as a coordination point for GTP. Cys-274 contributes to the [4Fe-4S] cluster binding site.

This sequence belongs to the radical SAM superfamily. MoaA family. As to quaternary structure, monomer and homodimer. [4Fe-4S] cluster is required as a cofactor.

It carries out the reaction GTP + AH2 + S-adenosyl-L-methionine = (8S)-3',8-cyclo-7,8-dihydroguanosine 5'-triphosphate + 5'-deoxyadenosine + L-methionine + A + H(+). The protein operates within cofactor biosynthesis; molybdopterin biosynthesis. Its function is as follows. Catalyzes the cyclization of GTP to (8S)-3',8-cyclo-7,8-dihydroguanosine 5'-triphosphate. The sequence is that of GTP 3',8-cyclase from Edwardsiella ictaluri (strain 93-146).